Here is a 172-residue protein sequence, read N- to C-terminus: Co-chaperone protein HscB homolog (172 aa).

Residues 2–69 (NHFELFNLPV…DSRAAYLLAL (68 aa)) enclose the J domain.

It belongs to the HscB family. Interacts with HscA and stimulates its ATPase activity.

Co-chaperone involved in the maturation of iron-sulfur cluster-containing proteins. Seems to help targeting proteins to be folded toward HscA. The sequence is that of Co-chaperone protein HscB homolog from Acinetobacter baumannii (strain AB307-0294).